The primary structure comprises 153 residues: Flagellar assembly factor FliW (153 aa).

This sequence belongs to the FliW family. Interacts with translational regulator CsrA and flagellin(s).

It localises to the cytoplasm. Its function is as follows. Acts as an anti-CsrA protein, binds CsrA and prevents it from repressing translation of its target genes, one of which is flagellin. Binds to flagellin and participates in the assembly of the flagellum. In Leptospira biflexa serovar Patoc (strain Patoc 1 / Ames), this protein is Flagellar assembly factor FliW.